The following is a 349-amino-acid chain: Small ribosomal subunit protein uS2 (349 aa).

It belongs to the universal ribosomal protein uS2 family.

This chain is Small ribosomal subunit protein uS2, found in Methylobacterium nodulans (strain LMG 21967 / CNCM I-2342 / ORS 2060).